The chain runs to 553 residues: Serine/threonine-protein phosphatase 2B catalytic subunit A1 (553 aa).

Serine 2 carries the post-translational modification N-acetylserine. Positions 119, 121, and 147 each coordinate Fe cation. Residues aspartate 147 and asparagine 179 each coordinate Zn(2+). Histidine 180 serves as the catalytic Proton donor. Zn(2+) contacts are provided by histidine 228 and histidine 317. Positions 413–447 (LDPESEPKAAEETVKARANATKETGTPSDEKASSA) are disordered. The span at 417–427 (SEPKAAEETVK) shows a compositional bias: basic and acidic residues.

The protein belongs to the PPP phosphatase family. PP-2B subfamily. As to quaternary structure, composed of two components (A and B), the A component is the catalytic subunit and the B component confers calcium sensitivity. Requires Fe(3+) as cofactor. Zn(2+) serves as cofactor.

It catalyses the reaction O-phospho-L-seryl-[protein] + H2O = L-seryl-[protein] + phosphate. The enzyme catalyses O-phospho-L-threonyl-[protein] + H2O = L-threonyl-[protein] + phosphate. Functionally, calcium-dependent, calmodulin-stimulated protein phosphatase. This subunit may have a role in the calmodulin activation of calcineurin. The protein is Serine/threonine-protein phosphatase 2B catalytic subunit A1 (CNA1) of Saccharomyces cerevisiae (strain ATCC 204508 / S288c) (Baker's yeast).